The primary structure comprises 78 residues: MKLTCVLIIAVLFLTAITADDSRDKQVYRAVGLIDKMRRIRASEGCRKKGDRCGTHLCCPGLRCGSGRAGGACRPPYN.

The first 19 residues, 1 to 19, serve as a signal peptide directing secretion; that stretch reads MKLTCVLIIAVLFLTAITA. Residues 20 to 41 constitute a propeptide that is removed on maturation; it reads DDSRDKQVYRAVGLIDKMRRIR. Disulfide bonds link Cys46–Cys59, Cys53–Cys64, and Cys58–Cys73.

This sequence belongs to the conotoxin O1 superfamily. As to expression, expressed by the venom duct.

It localises to the secreted. This chain is Conotoxin Bu2, found in Conus bullatus (Bubble cone).